The following is a 144-amino-acid chain: MGRFISVSFGLLVVFLSLSGTGADCPSEWSSHEGHCYKVFKLLKTWEDAEKFCTEQKKGSHLVSLHSREEEKFVVNLISENLEYPATWIGLGNMWKDCRMEWSDRGNVKYKALAEESYCLIMITHEKVWKSMTCNFIAPVVCKF.

The N-terminal stretch at 1 to 23 (MGRFISVSFGLLVVFLSLSGTGA) is a signal peptide. 3 cysteine pairs are disulfide-bonded: C25-C36, C53-C142, and C119-C134. In terms of domain architecture, C-type lectin spans 32-143 (HEGHCYKVFK…CNFIAPVVCK (112 aa)).

It belongs to the snaclec family. Heterodimer; disulfide-linked.

Its subcellular location is the secreted. Its function is as follows. Interferes with one step of hemostasis (modulation of platelet aggregation, or coagulation cascade, for example). The sequence is that of Snaclec 6 from Daboia siamensis (Eastern Russel's viper).